Reading from the N-terminus, the 606-residue chain is NADH-ubiquinone oxidoreductase chain 5 (606 aa).

15 helical membrane-spanning segments follow: residues 3 to 23 (VINLIPTLMLTSLIILTLPII), 38 to 58 (ITKTAVTYAFAISLIPTLLFI), 87 to 107 (FFSLTFMPIALFITWSIMEFS), 124 to 144 (LLLFLITMLILVSANNLLQLF), 180 to 200 (IGDMGFIMMMAWFTIHLNSWE), 216 to 236 (LLGLLLASAGKSAQFGLHPWL), 244 to 264 (TPVSALLHSSTMVMAGVFTLI), 276 to 296 (IQTSTLCLGAITTLFTAICAL), 304 to 323 (IIALSTSSQLGLMMVTIGIN), 328 to 350 (AFIHMCTHAFFKAMLFLSSGSII), 369 to 389 (MPITSTAIIIGSLALTGMPFL), 404 to 424 (MSYINTWALLITLIAVSMTAS), 460 to 480 (LILGSIFMGFLISMNTIPHTT), 483 to 503 (MTMPPHLKFMALAVTLLGFTV), and 586 to 606 (LMKLYFLSFLLSITLGLLIAL).

Belongs to the complex I subunit 5 family. In terms of assembly, core subunit of respiratory chain NADH dehydrogenase (Complex I) which is composed of 45 different subunits.

The protein resides in the mitochondrion inner membrane. The enzyme catalyses a ubiquinone + NADH + 5 H(+)(in) = a ubiquinol + NAD(+) + 4 H(+)(out). Functionally, core subunit of the mitochondrial membrane respiratory chain NADH dehydrogenase (Complex I) which catalyzes electron transfer from NADH through the respiratory chain, using ubiquinone as an electron acceptor. Essential for the catalytic activity and assembly of complex I. This Loxodonta africana (African elephant) protein is NADH-ubiquinone oxidoreductase chain 5 (MT-ND5).